A 294-amino-acid polypeptide reads, in one-letter code: Foldase protein PrsA 1 (294 aa).

Positions 1–21 (MTKLKKVMISLVAATLLLLAG) are cleaved as a signal peptide. Residue Cys22 is the site of N-palmitoyl cysteine attachment. Residue Cys22 is the site of S-diacylglycerol cysteine attachment. The region spanning 135 to 226 (EPNITVRHIL…YGYHLIQLVK (92 aa)) is the PpiC domain.

It belongs to the PrsA family.

It localises to the cell membrane. It carries out the reaction [protein]-peptidylproline (omega=180) = [protein]-peptidylproline (omega=0). In terms of biological role, plays a major role in protein secretion by helping the post-translocational extracellular folding of several secreted proteins. The polypeptide is Foldase protein PrsA 1 (prsA1) (Listeria innocua serovar 6a (strain ATCC BAA-680 / CLIP 11262)).